The chain runs to 76 residues: Sec-independent protein translocase protein TatA (76 aa).

The helical transmembrane segment at Met-1 to Gly-21 threads the bilayer. The interval Met-43 to Ala-76 is disordered. The span at Glu-46–Ala-76 shows a compositional bias: basic and acidic residues.

Belongs to the TatA/E family. The Tat system comprises two distinct complexes: a TatABC complex, containing multiple copies of TatA, TatB and TatC subunits, and a separate TatA complex, containing only TatA subunits. Substrates initially bind to the TatABC complex, which probably triggers association of the separate TatA complex to form the active translocon.

It localises to the cell inner membrane. Part of the twin-arginine translocation (Tat) system that transports large folded proteins containing a characteristic twin-arginine motif in their signal peptide across membranes. TatA could form the protein-conducting channel of the Tat system. In Shewanella loihica (strain ATCC BAA-1088 / PV-4), this protein is Sec-independent protein translocase protein TatA.